Here is a 361-residue protein sequence, read N- to C-terminus: Ribosomal RNA large subunit methyltransferase M (361 aa).

S-adenosyl-L-methionine-binding positions include Ser-190, 223 to 226 (CPGG), Asp-242, Asp-262, and Asp-280. The active-site Proton acceptor is Lys-309.

This sequence belongs to the class I-like SAM-binding methyltransferase superfamily. RNA methyltransferase RlmE family. RlmM subfamily. In terms of assembly, monomer.

It localises to the cytoplasm. It carries out the reaction cytidine(2498) in 23S rRNA + S-adenosyl-L-methionine = 2'-O-methylcytidine(2498) in 23S rRNA + S-adenosyl-L-homocysteine + H(+). Functionally, catalyzes the 2'-O-methylation at nucleotide C2498 in 23S rRNA. The protein is Ribosomal RNA large subunit methyltransferase M of Actinobacillus pleuropneumoniae serotype 7 (strain AP76).